The sequence spans 405 residues: MTTTDSGTGKLVRTQGVTAPLGFRAAGIAAGIKASGKPDLALVFNEGPEYAAAGVFTRNKVKAAPVLWSQQVLTSRRLRAVILNSGGANACTGPEGFQDTHRTAEELARALSNWGTETGAGEIAVCSTGLIGDRLPMDKLIPAVTEIVHEMGGGLSGGTDAAHAIMTTDTVPKEAAFHHRDKWNVGGMAKGAGMLAPSLATMLVVLTTDAAVTAEQLDTALRKATRLTFDRLDVDGSCSTNDTVLLLANGASEVTPSQEELEAAVFAVCDDLAAQLMADAEGVTKRVRVTVTGAANEDEAVTAARAIARDSLVKTALFGSDPNWGRVLAAVGIAPITLDPDRISVSFNGNPVCVNGVGAPGARQVDLSGADIDVLVELNVGDGEAMIRTTDLSHGYVEENSAYSS.

The substrate site is built by T167, K190, T201, E281, N400, and S405. The Nucleophile role is filled by T201.

The protein belongs to the ArgJ family. As to quaternary structure, heterotetramer of two alpha and two beta chains.

It localises to the cytoplasm. It carries out the reaction N(2)-acetyl-L-ornithine + L-glutamate = N-acetyl-L-glutamate + L-ornithine. It catalyses the reaction L-glutamate + acetyl-CoA = N-acetyl-L-glutamate + CoA + H(+). It participates in amino-acid biosynthesis; L-arginine biosynthesis; L-ornithine and N-acetyl-L-glutamate from L-glutamate and N(2)-acetyl-L-ornithine (cyclic): step 1/1. It functions in the pathway amino-acid biosynthesis; L-arginine biosynthesis; N(2)-acetyl-L-ornithine from L-glutamate: step 1/4. Catalyzes two activities which are involved in the cyclic version of arginine biosynthesis: the synthesis of N-acetylglutamate from glutamate and acetyl-CoA as the acetyl donor, and of ornithine by transacetylation between N(2)-acetylornithine and glutamate. The protein is Arginine biosynthesis bifunctional protein ArgJ of Nocardia farcinica (strain IFM 10152).